Reading from the N-terminus, the 501-residue chain is Geissoschizine oxidase (501 aa).

Residues 1-21 (MEFSFSSPLLYILYFLLFFIV) form a helical membrane-spanning segment. C442 is a heme binding site.

It belongs to the cytochrome P450 family. It depends on heme as a cofactor.

The protein resides in the membrane. It catalyses the reaction (19E)-geissoschizine + reduced [NADPH--hemoprotein reductase] + O2 = akuammicine + formate + oxidized [NADPH--hemoprotein reductase] + H2O + H(+). Its pathway is alkaloid biosynthesis. A cytochrome P450 monooxygenase involved in the biosynthesis of strychnos monoterpene indole alkaloids (MIAs) natural products, compounds with effects on glucose absorption. Catalyzes the conversion of geissoschizine to akuammicine. In Alstonia scholaris (Dogbane), this protein is Geissoschizine oxidase.